The primary structure comprises 456 residues: RuvB-like 1 (456 aa).

A Glycyl lysine isopeptide (Lys-Gly) (interchain with G-Cter in SUMO2) cross-link involves residue Lys-2. 70–77 (GPPGTGKT) provides a ligand contact to ATP. Residue Lys-225 forms a Glycyl lysine isopeptide (Lys-Gly) (interchain with G-Cter in SUMO1); alternate linkage. A Glycyl lysine isopeptide (Lys-Gly) (interchain with G-Cter in SUMO2); alternate cross-link involves residue Lys-225. Lys-445 is covalently cross-linked (Glycyl lysine isopeptide (Lys-Gly) (interchain with G-Cter in SUMO2)). N6-acetyllysine is present on Lys-453.

This sequence belongs to the RuvB family. In terms of assembly, forms homohexameric rings. Can form a dodecamer with RUVBL2 made of two stacked hexameric rings; however, even though RUVBL1 and RUVBL2 are present in equimolar ratio, the oligomeric status of each hexamer is not known. Oligomerization may regulate binding to nucleic acids and conversely, binding to nucleic acids may affect the dodecameric assembly. Interaction of the complex with DHX34 results in conformational changes of the N-terminus of the RUVBL2 subunits, resulting in loss of nucleotide binding ability and ATP hydrolysis of the complex. Interacts with the transcriptional activation domain of MYC. Component of the RNA polymerase II holoenzyme complex. May also act to bridge the LEF1/TCF1-CTNNB1 complex and TBP. Component of the NuA4 histone acetyltransferase complex which contains the catalytic subunit KAT5/TIP60 and the subunits EP400, TRRAP/PAF400, BRD8/SMAP, EPC1, DMAP1/DNMAP1, RUVBL1/TIP49, RUVBL2, ING3, actin, ACTL6A/BAF53A, MORF4L1/MRG15, MORF4L2/MRGX, MRGBP, YEATS4/GAS41, VPS72/YL1 and MEAF6. The NuA4 complex interacts with MYC and the adenovirus E1A protein. RUVBL1 interacts with EP400. Component of a NuA4-related complex which contains EP400, TRRAP/PAF400, SRCAP, BRD8/SMAP, EPC1, DMAP1/DNMAP1, RUVBL1/TIP49, RUVBL2, actin, ACTL6A/BAF53A, VPS72 and YEATS4/GAS41. Component of the BAF53 complex, at least composed of ACTL6A/BAF53A, RUVBL1/TIP49, SMARCA2/BRM, and TRRAP/PAF400. Component of some MLL1/MLL complex, at least composed of the core components KMT2A/MLL1, ASH2L, HCFC1/HCF1, WDR5 and RBBP5, as well as the facultative components BACC1, CHD8, E2F6, HSP70, INO80C, KANSL1, LAS1L, MAX, MCRS1, MGA, MYST1/MOF, PELP1, PHF20, PRP31, RING2, RUVB1/TIP49A, RUVB2/TIP49B, SENP3, TAF1, TAF4, TAF6, TAF7, TAF9 and TEX10. Associates with alpha and gamma tubulins, particularly during metaphase and early anaphase. Interacts with NPAT. Component of the chromatin-remodeling INO80 complex; specifically part of a complex module associated with the helicase ATP-binding and the helicase C-terminal domain of INO80. Interacts with IGHMBP2. Interacts with OFD1. Interacts with HINT1. Component of a complex with USP49 and PSMC5. Component of a SWR1-like complex. Component of the R2TP complex composed at least of RUVBL1, RUVBL2, RPAP3 and PIHD1. Component of the PAQosome complex which is responsible for the biogenesis of several protein complexes and which consists of R2TP complex members RUVBL1, RUVBL2, RPAP3 and PIH1D1, URI complex members PFDN2, PFDN6, PDRG1, UXT and URI1 as well as ASDURF, POLR2E and DNAAF10/WDR92. Interacts with PIH1D1. Interacts with ITFG1. Interacts with WAC; WAC positively regulates MTOR activity by promoting the assembly of the TTT complex composed of TELO2, TTI1 and TTI2 and the RUVBL complex composed of RUVBL1 and RUVBL2 into the TTT-RUVBL complex which leads to the dimerization of the mTORC1 complex and its subsequent activation. The RUVBL1/RUVBL2 complex interacts with ZNHIT1 (via HIT-type zinc finger), ZNHIT3 (via HIT-type zinc finger), ZNHIT6 (via HIT-type zinc finger) and DDX59/ZNHIT5 (via HIT-type zinc finger) in the presence of ADP. Interacts with NOPCHAP1; the interaction is direct and disrupted upon ATP binding. Interacts with SMG1. Interacts with NOP2, NOP56 and NUFIP1. (Microbial infection) Interacts with Mumps L polymerase; this interaction regulates the viral transcription. Ubiquitously expressed with high expression in heart, skeletal muscle and testis.

The protein localises to the nucleus matrix. It is found in the nucleus. It localises to the nucleoplasm. Its subcellular location is the cytoplasm. The protein resides in the membrane. The protein localises to the cytoskeleton. It is found in the microtubule organizing center. It localises to the centrosome. Its subcellular location is the dynein axonemal particle. The enzyme catalyses ATP + H2O = ADP + phosphate + H(+). Its function is as follows. Possesses single-stranded DNA-stimulated ATPase and ATP-dependent DNA helicase (3' to 5') activity; hexamerization is thought to be critical for ATP hydrolysis and adjacent subunits in the ring-like structure contribute to the ATPase activity. Component of the NuA4 histone acetyltransferase complex which is involved in transcriptional activation of select genes principally by acetylation of nucleosomal histones H4 and H2A. This modification may both alter nucleosome-DNA interactions and promote interaction of the modified histones with other proteins which positively regulate transcription. This complex may be required for the activation of transcriptional programs associated with oncogene and proto-oncogene mediated growth induction, tumor suppressor mediated growth arrest and replicative senescence, apoptosis, and DNA repair. The NuA4 complex ATPase and helicase activities seem to be, at least in part, contributed by the association of RUVBL1 and RUVBL2 with EP400. NuA4 may also play a direct role in DNA repair when recruited to sites of DNA damage. Component of a SWR1-like complex that specifically mediates the removal of histone H2A.Z/H2AZ1 from the nucleosome. Proposed core component of the chromatin remodeling INO80 complex which exhibits DNA- and nucleosome-activated ATPase activity and catalyzes ATP-dependent nucleosome sliding. Plays an essential role in oncogenic transformation by MYC and also modulates transcriptional activation by the LEF1/TCF1-CTNNB1 complex. Essential for cell proliferation. May be able to bind plasminogen at cell surface and enhance plasminogen activation. The polypeptide is RuvB-like 1 (Homo sapiens (Human)).